A 154-amino-acid polypeptide reads, in one-letter code: Putative pre-16S rRNA nuclease (154 aa).

This sequence belongs to the YqgF nuclease family.

The protein localises to the cytoplasm. Its function is as follows. Could be a nuclease involved in processing of the 5'-end of pre-16S rRNA. The chain is Putative pre-16S rRNA nuclease from Ruegeria pomeroyi (strain ATCC 700808 / DSM 15171 / DSS-3) (Silicibacter pomeroyi).